A 193-amino-acid chain; its full sequence is Transmembrane protein 276 (193 aa).

Positions 1–32 are cleaved as a signal peptide; that stretch reads MTPRPGGEWSSALSHLALGAVSLHAALSTAQA. A run of 4 helical transmembrane segments spans residues 35–55, 63–83, 89–109, and 114–134; these read GAAA…ASGL, AGAW…FHWV, SANL…HLGA, and VAGQ…AVFT.

The protein resides in the membrane. In Bos taurus (Bovine), this protein is Transmembrane protein 276.